Here is a 362-residue protein sequence, read N- to C-terminus: Ferrochelatase (362 aa).

Residues H228 and E309 each coordinate Fe cation.

Belongs to the ferrochelatase family.

Its subcellular location is the cytoplasm. It carries out the reaction heme b + 2 H(+) = protoporphyrin IX + Fe(2+). It participates in porphyrin-containing compound metabolism; protoheme biosynthesis; protoheme from protoporphyrin-IX: step 1/1. Functionally, catalyzes the ferrous insertion into protoporphyrin IX. The chain is Ferrochelatase from Bordetella parapertussis (strain 12822 / ATCC BAA-587 / NCTC 13253).